Reading from the N-terminus, the 346-residue chain is Protein phosphatase 1 regulatory subunit 7 (346 aa).

Over residues 1 to 13 (MADEEGETEVQEM) the composition is skewed to acidic residues. Residues 1–46 (MADEEGETEVQEMEVDRRESDESADDEAKEKPDRVDGGVKNGEVPL) are disordered. Over residues 14–37 (EVDRRESDESADDEAKEKPDRVDG) the composition is skewed to basic and acidic residues. LRR repeat units follow at residues 63–84 (EAED…EVLK), 85–106 (KVKT…EQLV), 107–128 (TLTE…ETLR), 129–150 (DLQI…ESLS), 151–172 (HLQR…GTLT), 173–194 (QLRL…DSLR), 195–216 (ELDS…ETLT), 217–238 (NLTV…QNLV), 239–260 (NLRE…ENNN), 261–282 (KLTT…KHLS), and 283–304 (ELQE…EELS). The LRRCT domain occupies 317-346 (NPLQKDAQYRRKIMLALPSVRQIDATFVRF).

The protein belongs to the SDS22 family.

The protein resides in the nucleus. Functionally, regulatory subunit of protein phosphatase 1. This Xenopus tropicalis (Western clawed frog) protein is Protein phosphatase 1 regulatory subunit 7 (ppp1r7).